Here is a 396-residue protein sequence, read N- to C-terminus: Ribosomal RNA large subunit methyltransferase I (396 aa).

In terms of domain architecture, PUA spans 2-79 (AIRIKLKPGR…REEEIDRAFF (78 aa)).

It belongs to the methyltransferase superfamily. RlmI family.

It is found in the cytoplasm. It carries out the reaction cytidine(1962) in 23S rRNA + S-adenosyl-L-methionine = 5-methylcytidine(1962) in 23S rRNA + S-adenosyl-L-homocysteine + H(+). Its function is as follows. Specifically methylates the cytosine at position 1962 (m5C1962) of 23S rRNA. In Shewanella putrefaciens (strain CN-32 / ATCC BAA-453), this protein is Ribosomal RNA large subunit methyltransferase I.